A 241-amino-acid polypeptide reads, in one-letter code: Adapter protein MecA (241 aa).

The disordered stretch occupies residues 115-141 (TDSNDKNNDDSSYMSDGNPADLNGYAN).

The protein belongs to the MecA family. In terms of assembly, homodimer.

In terms of biological role, enables the recognition and targeting of unfolded and aggregated proteins to the ClpC protease or to other proteins involved in proteolysis. This Pediococcus pentosaceus (strain ATCC 25745 / CCUG 21536 / LMG 10740 / 183-1w) protein is Adapter protein MecA.